The chain runs to 301 residues: 4-hydroxy-tetrahydrodipicolinate synthase (301 aa).

Thr-57 contacts pyruvate. Tyr-145 functions as the Proton donor/acceptor in the catalytic mechanism. Lys-173 acts as the Schiff-base intermediate with substrate in catalysis. Residue Ile-213 coordinates pyruvate.

The protein belongs to the DapA family. As to quaternary structure, homotetramer; dimer of dimers.

The protein resides in the cytoplasm. The enzyme catalyses L-aspartate 4-semialdehyde + pyruvate = (2S,4S)-4-hydroxy-2,3,4,5-tetrahydrodipicolinate + H2O + H(+). It functions in the pathway amino-acid biosynthesis; L-lysine biosynthesis via DAP pathway; (S)-tetrahydrodipicolinate from L-aspartate: step 3/4. Catalyzes the condensation of (S)-aspartate-beta-semialdehyde [(S)-ASA] and pyruvate to 4-hydroxy-tetrahydrodipicolinate (HTPA). The protein is 4-hydroxy-tetrahydrodipicolinate synthase of Corynebacterium diphtheriae (strain ATCC 700971 / NCTC 13129 / Biotype gravis).